Reading from the N-terminus, the 426-residue chain is Serine--tRNA ligase (426 aa).

Residue 228–230 (TSE) coordinates L-serine. ATP is bound by residues 259–261 (RRE) and Val275. Glu282 serves as a coordination point for L-serine. ATP is bound at residue 346–349 (ELTS). Thr386 contacts L-serine.

Belongs to the class-II aminoacyl-tRNA synthetase family. Type-1 seryl-tRNA synthetase subfamily. In terms of assembly, homodimer. The tRNA molecule binds across the dimer.

Its subcellular location is the cytoplasm. The enzyme catalyses tRNA(Ser) + L-serine + ATP = L-seryl-tRNA(Ser) + AMP + diphosphate + H(+). It catalyses the reaction tRNA(Sec) + L-serine + ATP = L-seryl-tRNA(Sec) + AMP + diphosphate + H(+). It participates in aminoacyl-tRNA biosynthesis; selenocysteinyl-tRNA(Sec) biosynthesis; L-seryl-tRNA(Sec) from L-serine and tRNA(Sec): step 1/1. Its function is as follows. Catalyzes the attachment of serine to tRNA(Ser). Is also able to aminoacylate tRNA(Sec) with serine, to form the misacylated tRNA L-seryl-tRNA(Sec), which will be further converted into selenocysteinyl-tRNA(Sec). This is Serine--tRNA ligase from Arthrobacter sp. (strain FB24).